The following is a 213-amino-acid chain: Cell division protein SepF 2 (213 aa).

The tract at residues 16-89 is disordered; that stretch reads EDDGYDGRGF…ASLAAESSRP (74 aa). A compositionally biased stretch (acidic residues) spans 27–39; that stretch reads PDDDFEPELDPEP.

It belongs to the SepF family. In terms of assembly, homodimer. Interacts with FtsZ.

Its subcellular location is the cytoplasm. Functionally, cell division protein that is part of the divisome complex and is recruited early to the Z-ring. Probably stimulates Z-ring formation, perhaps through the cross-linking of FtsZ protofilaments. Its function overlaps with FtsA. This Streptomyces coelicolor (strain ATCC BAA-471 / A3(2) / M145) protein is Cell division protein SepF 2.